The sequence spans 131 residues: uncharacterized protein (131 aa).

Residues 31-40 show a composition bias toward low complexity; it reads AAATSRAAPL. Positions 31–131 are disordered; sequence AAATSRAAPL…EAKTEQTKTP (101 aa).

This is an uncharacterized protein from Homo sapiens (Human).